The sequence spans 154 residues: SsrA-binding protein (154 aa).

Residues 123–142 (AEHDKRHTIKDRDWQREQGR) are compositionally biased toward basic and acidic residues. The interval 123–154 (AEHDKRHTIKDRDWQREQGRLMRHKVSAPHKD) is disordered. The segment covering 143–154 (LMRHKVSAPHKD) has biased composition (basic residues).

This sequence belongs to the SmpB family.

It localises to the cytoplasm. Required for rescue of stalled ribosomes mediated by trans-translation. Binds to transfer-messenger RNA (tmRNA), required for stable association of tmRNA with ribosomes. tmRNA and SmpB together mimic tRNA shape, replacing the anticodon stem-loop with SmpB. tmRNA is encoded by the ssrA gene; the 2 termini fold to resemble tRNA(Ala) and it encodes a 'tag peptide', a short internal open reading frame. During trans-translation Ala-aminoacylated tmRNA acts like a tRNA, entering the A-site of stalled ribosomes, displacing the stalled mRNA. The ribosome then switches to translate the ORF on the tmRNA; the nascent peptide is terminated with the 'tag peptide' encoded by the tmRNA and targeted for degradation. The ribosome is freed to recommence translation, which seems to be the essential function of trans-translation. The sequence is that of SsrA-binding protein from Leptothrix cholodnii (strain ATCC 51168 / LMG 8142 / SP-6) (Leptothrix discophora (strain SP-6)).